The sequence spans 499 residues: Histidine ammonia-lyase (499 aa).

The 5-imidazolinone (Ala-Gly) cross-link spans 142 to 144; it reads ASG. Position 143 is a 2,3-didehydroalanine (Ser) (serine 143).

This sequence belongs to the PAL/histidase family. Post-translationally, contains an active site 4-methylidene-imidazol-5-one (MIO), which is formed autocatalytically by cyclization and dehydration of residues Ala-Ser-Gly.

The protein resides in the cytoplasm. It catalyses the reaction L-histidine = trans-urocanate + NH4(+). Its pathway is amino-acid degradation; L-histidine degradation into L-glutamate; N-formimidoyl-L-glutamate from L-histidine: step 1/3. The polypeptide is Histidine ammonia-lyase (Staphylococcus saprophyticus subsp. saprophyticus (strain ATCC 15305 / DSM 20229 / NCIMB 8711 / NCTC 7292 / S-41)).